Here is a 257-residue protein sequence, read N- to C-terminus: Imidazole glycerol phosphate synthase subunit HisF (257 aa).

Residues Asp-12 and Asp-131 contribute to the active site.

The protein belongs to the HisA/HisF family. In terms of assembly, heterodimer of HisH and HisF.

The protein resides in the cytoplasm. It catalyses the reaction 5-[(5-phospho-1-deoxy-D-ribulos-1-ylimino)methylamino]-1-(5-phospho-beta-D-ribosyl)imidazole-4-carboxamide + L-glutamine = D-erythro-1-(imidazol-4-yl)glycerol 3-phosphate + 5-amino-1-(5-phospho-beta-D-ribosyl)imidazole-4-carboxamide + L-glutamate + H(+). Its pathway is amino-acid biosynthesis; L-histidine biosynthesis; L-histidine from 5-phospho-alpha-D-ribose 1-diphosphate: step 5/9. IGPS catalyzes the conversion of PRFAR and glutamine to IGP, AICAR and glutamate. The HisF subunit catalyzes the cyclization activity that produces IGP and AICAR from PRFAR using the ammonia provided by the HisH subunit. This is Imidazole glycerol phosphate synthase subunit HisF from Marinobacter nauticus (strain ATCC 700491 / DSM 11845 / VT8) (Marinobacter aquaeolei).